The following is a 153-amino-acid chain: MTDQALQTLVEKISIVFFQKPFLHQATFNRRLKTTGGRYHLASHHLDFNPTVFLKYGQEELEKVIKHELCHYHLHLAGKGYQHKDKDFKELLAKTGGARYAPPLVERKKAVFHQYQCQSCGEVILRKRRIDTTRYVCGKCHGRLSWQAKKEQI.

Residues Gln7–Ser145 enclose the SprT-like domain. Zn(2+) is bound at residue His67. Residue Glu68 is part of the active site. His71 lines the Zn(2+) pocket.

It belongs to the SprT family. It depends on Zn(2+) as a cofactor.

Its subcellular location is the cytoplasm. This Enterococcus faecalis (strain ATCC 700802 / V583) protein is Protein SprT-like.